The chain runs to 110 residues: Methionine-R-sulfoxide reductase B1-A (110 aa).

The 104-residue stretch at Met1–Lys104 folds into the MsrB domain. The Zn(2+) site is built by Cys23, Cys26, Cys69, and Cys72. The active-site Nucleophile is the Sec93. Sec93 is a non-standard amino acid (selenocysteine).

It belongs to the MsrB Met sulfoxide reductase family. It depends on Zn(2+) as a cofactor. In terms of tissue distribution, in the embryo, expressed in the polster, paraxial mesoderm, tectum, otic vesicle and liver.

The protein resides in the cytoplasm. It localises to the nucleus. The protein localises to the cytoskeleton. It catalyses the reaction L-methionyl-[protein] + [thioredoxin]-disulfide + H2O = L-methionyl-(R)-S-oxide-[protein] + [thioredoxin]-dithiol. The enzyme catalyses [thioredoxin]-disulfide + L-methionine + H2O = L-methionine (R)-S-oxide + [thioredoxin]-dithiol. Its function is as follows. Methionine-sulfoxide reductase that specifically reduces methionine (R)-sulfoxide back to methionine. While in many cases, methionine oxidation is the result of random oxidation following oxidative stress, methionine oxidation is also a post-translational modification that takes place on specific residue. Acts as a regulator of actin assembly by reducing methionine (R)-sulfoxide mediated by MICALs (mical1, mical2 or mical3) on actin, thereby promoting filament repolymerization. Plays a role in innate immunity by reducing oxidized actin, leading to actin repolymerization in macrophages. The protein is Methionine-R-sulfoxide reductase B1-A (msrb1) of Danio rerio (Zebrafish).